Reading from the N-terminus, the 284-residue chain is Small ribosomal subunit protein uS5y/uS5u/uS5v (284 aa).

Residues 1-19 (MAERGGESGAERGGDRGDF) show a composition bias toward basic and acidic residues. Residues 1 to 51 (MAERGGESGAERGGDRGDFGRGFGGGRGGGRGRDRGPRGRGRRGGRASEET) are disordered. The span at 20-29 (GRGFGGGRGG) shows a compositional bias: gly residues. Positions 95 to 158 (LKDEVMKIMP…ILAKLSVVPV (64 aa)) constitute an S5 DRBM domain.

This sequence belongs to the universal ribosomal protein uS5 family.

The protein is Small ribosomal subunit protein uS5y/uS5u/uS5v (RPS2B) of Arabidopsis thaliana (Mouse-ear cress).